The following is a 346-amino-acid chain: Biotin synthase (346 aa).

One can recognise a Radical SAM core domain in the interval 38–256; that stretch reads RQVQVSTLLS…IAVARIMMPT (219 aa). The [4Fe-4S] cluster site is built by Cys53, Cys57, and Cys60. Residues Cys97, Cys128, Cys188, and Arg260 each contribute to the [2Fe-2S] cluster site.

Belongs to the radical SAM superfamily. Biotin synthase family. Homodimer. The cofactor is [4Fe-4S] cluster. [2Fe-2S] cluster serves as cofactor.

It carries out the reaction (4R,5S)-dethiobiotin + (sulfur carrier)-SH + 2 reduced [2Fe-2S]-[ferredoxin] + 2 S-adenosyl-L-methionine = (sulfur carrier)-H + biotin + 2 5'-deoxyadenosine + 2 L-methionine + 2 oxidized [2Fe-2S]-[ferredoxin]. It participates in cofactor biosynthesis; biotin biosynthesis; biotin from 7,8-diaminononanoate: step 2/2. In terms of biological role, catalyzes the conversion of dethiobiotin (DTB) to biotin by the insertion of a sulfur atom into dethiobiotin via a radical-based mechanism. The chain is Biotin synthase from Escherichia coli O157:H7.